A 401-amino-acid chain; its full sequence is Adaptive-response sensory kinase SasA (401 aa).

The Histidine kinase domain occupies 175–400; it reads MLVHDLRNPL…WFHFTLPVYP (226 aa). His-178 carries the phosphohistidine; by autocatalysis modification.

In terms of assembly, homooligomerizes. Interacts with KaiC. Participates in the KaiABC clock complex, whose core is composed of a KaiC homohexamer, 6 KaiB and up to 6 KaiA dimers. SasA and KaiB(fs) compete to bind to KaiC.

The enzyme catalyses ATP + protein L-histidine = ADP + protein N-phospho-L-histidine.. In terms of biological role, member of the two-component regulatory system SasA/RpaA involved in genome-wide circadian gene expression. One of several clock output pathways. Participates in the Kai clock protein complex, the main circadian regulator in cyanobacteria, via its interaction with KaiC. KaiC enhances the autophosphorylation activity of SasA, which then transfers its phosphate group to RpaA to activate it. In addition to its output function, recruits fold-shifted KaiB (KaiB(fs)) to KaiC to cooperatively form the KaiB(6):KaiC(6) complex (independent of SasA kinase activity). Required for robustness of the circadian rhythm of gene expression and is involved in clock output, also required for adaptation to light/dark cycles. The sequence is that of Adaptive-response sensory kinase SasA from Trichormus variabilis (strain ATCC 29413 / PCC 7937) (Anabaena variabilis).